Consider the following 370-residue polypeptide: Anhydro-N-acetylmuramic acid kinase (370 aa).

Position 13 to 20 (13 to 20) interacts with ATP; the sequence is GTSMDGVD.

Belongs to the anhydro-N-acetylmuramic acid kinase family.

The catalysed reaction is 1,6-anhydro-N-acetyl-beta-muramate + ATP + H2O = N-acetyl-D-muramate 6-phosphate + ADP + H(+). Its pathway is amino-sugar metabolism; 1,6-anhydro-N-acetylmuramate degradation. It functions in the pathway cell wall biogenesis; peptidoglycan recycling. Catalyzes the specific phosphorylation of 1,6-anhydro-N-acetylmuramic acid (anhMurNAc) with the simultaneous cleavage of the 1,6-anhydro ring, generating MurNAc-6-P. Is required for the utilization of anhMurNAc either imported from the medium or derived from its own cell wall murein, and thus plays a role in cell wall recycling. The protein is Anhydro-N-acetylmuramic acid kinase of Vibrio parahaemolyticus serotype O3:K6 (strain RIMD 2210633).